The primary structure comprises 73 residues: Putative antitoxin VapB38 (73 aa).

Functionally, probable antitoxin component of a type II toxin-antitoxin (TA) system. Its putative cognate toxin is VapC38. The protein is Putative antitoxin VapB38 (vapB38) of Mycobacterium tuberculosis (strain ATCC 25618 / H37Rv).